Reading from the N-terminus, the 701-residue chain is MEEKSLLQKLRSYPPAVFFMLGNEFCERFSFYGMKTILFIYLITEHEFSPSKATFIYHLFTCIAYLTPLIGSIMADSVFGRFKVILYGSSIYVVGHVLLSLGAVPFLSYPIRSSLDFSGLFVIAFATGCIKPCVSAFAADQFTEDQKDLRSQFFSFFYFAINGGSLFAIIITPILRGRVQCFGNAHCFPLAFGVPGVLMLLALILFLMGWSMYKKHPPSKENVGSKVVAVIYTSLRKMVGGASRDKPVTHWLDHAAPEHSQKMIDSTRGLLNVAVIFCPLIFFWALFDQQGSTWVLQARRLDGRVGHFSILPEQIHAINPVCVLILVPIFEGWVYPALRKITRVTPLRKMAVGGLLTAFSFAIAGVLQLKVNETMEFPPSLGRIYLQRVGNESLISDFRYKSDGRLIGDGMLPKGRTELDAGIYTFNTGLKNESQEIDISTPNKGYVMAVFRLKDAVEVVKFDYKVEKTDNGATRVFVVTAREDADTLVYAINKKGKILSSCELKSGSYVDVIPGIISDPNVRLYWGPKNSCSGVDCPNTVTLNAQMGAVHVLHIHPSTTEGDFNLLVRPNSVSILWSLPQYIIITLGEVLLSVTGLEFAYSQAAPNMKSVLTAMWLLTVFAGNLIDMMISGTRLIPHPALEFFFYSTLMVIVMGVFILLAMQYTYVEDNDDEITITESEKKDVIALTEIESGTATSDKKE.

9 consecutive transmembrane segments (helical) span residues 29 to 49 (FSFY…HEFS), 55 to 75 (FIYH…SIMA), 91 to 111 (IYVV…SYPI), 119 to 139 (GLFV…AFAA), 154 to 174 (FSFF…ITPI), 188 to 208 (FPLA…LFLM), 269 to 289 (GLLN…LFDQ), 318 to 338 (INPV…YPAL), and 351 to 371 (AVGG…QLKV). N-linked (GlcNAc...) asparagine glycans are attached at residues N391 and N432. Transmembrane regions (helical) follow at residues 575–595 (ILWS…LSVT), 611–631 (VLTA…MMIS), and 641–661 (LEFF…ILLA).

The protein belongs to the major facilitator superfamily. Proton-dependent oligopeptide transporter (POT/PTR) (TC 2.A.17) family. In terms of tissue distribution, expressed in the AVA interneuron.

Its subcellular location is the membrane. Neuron-specific, H(+)-coupled oligopeptide transporter with broad specificity towards di- and tripeptides in a Na(+) and Cl(-)-independent manner. Shows H(+) channel activity in the absence of peptide substrates. The chain is Peptide transporter 3 (pept-3) from Caenorhabditis elegans.